The primary structure comprises 554 residues: Propanediol dehydratase large subunit (554 aa).

It belongs to the diol/glycerol dehydratase large subunit family. The propanediol dehydratase enzyme is a heterotrimeric complex composed of a large (PduC), a medium (PduD) and a small (PduE) subunit. Requires adenosylcob(III)alamin as cofactor.

Its subcellular location is the bacterial microcompartment. The enzyme catalyses propane-1,2-diol = propanal + H2O. It functions in the pathway polyol metabolism; 1,2-propanediol degradation. Functionally, part of the PduCDE complex that catalyzes the dehydration of 1,2-propanediol (1,2-PD) to propionaldehyde. This subunit is directly targeted to the bacterial microcompartment (BMC). In terms of biological role, expression of a cosmid containing the full 21-gene pdu operon in E.coli allows E.coli to grow on 1,2-propanediol (1,2-PD) with the appearance of BMCs in its cytoplasm. Its function is as follows. The 1,2-PD-specific bacterial microcompartment (BMC) concentrates low levels of 1,2-PD catabolic enzymes, concentrates volatile reaction intermediates thus enhancing pathway flux and keeps the level of toxic, mutagenic propionaldehyde low. This is Propanediol dehydratase large subunit from Citrobacter freundii.